The chain runs to 542 residues: Ribulokinase 2 (542 aa).

Belongs to the ribulokinase family.

The enzyme catalyses D-ribulose + ATP = D-ribulose 5-phosphate + ADP + H(+). The catalysed reaction is L-ribulose + ATP = L-ribulose 5-phosphate + ADP + H(+). It functions in the pathway carbohydrate degradation; L-arabinose degradation via L-ribulose; D-xylulose 5-phosphate from L-arabinose (bacterial route): step 2/3. The chain is Ribulokinase 2 from Staphylococcus saprophyticus subsp. saprophyticus (strain ATCC 15305 / DSM 20229 / NCIMB 8711 / NCTC 7292 / S-41).